The chain runs to 652 residues: ATP-dependent zinc metalloprotease FtsH (652 aa).

At 1–11 (MKKQNNGLIKN) the chain is on the cytoplasmic side. A helical membrane pass occupies residues 12-32 (PFLWLLFIFFLVTGFQYFYSG). Over 33-131 (NNSGGSQQIN…EVTVKHESSS (99 aa)) the chain is Extracellular. The helical transmembrane segment at 132-152 (GIWINLLVSIVPFGILFFFLF) threads the bilayer. Topologically, residues 153-652 (SMMGNMGGGN…EVKSKMNDEK (500 aa)) are cytoplasmic. Residue 227 to 234 (GPPGTGKT) coordinates ATP. H449 provides a ligand contact to Zn(2+). E450 is a catalytic residue. 2 residues coordinate Zn(2+): H453 and D525. Residues 628 to 652 (MPEAVEEESHALSYDEVKSKMNDEK) are disordered. A compositionally biased stretch (basic and acidic residues) spans 634 to 652 (EESHALSYDEVKSKMNDEK).

This sequence in the central section; belongs to the AAA ATPase family. In the C-terminal section; belongs to the peptidase M41 family. As to quaternary structure, homohexamer. Zn(2+) is required as a cofactor.

It is found in the cell membrane. Acts as a processive, ATP-dependent zinc metallopeptidase for both cytoplasmic and membrane proteins. Plays a role in the quality control of integral membrane proteins. The polypeptide is ATP-dependent zinc metalloprotease FtsH (Streptococcus pneumoniae (strain ATCC BAA-255 / R6)).